The sequence spans 292 residues: Bifunctional protein FolD (292 aa).

NADP(+)-binding positions include G161–S163 and I231.

Belongs to the tetrahydrofolate dehydrogenase/cyclohydrolase family. Homodimer.

The enzyme catalyses (6R)-5,10-methylene-5,6,7,8-tetrahydrofolate + NADP(+) = (6R)-5,10-methenyltetrahydrofolate + NADPH. It carries out the reaction (6R)-5,10-methenyltetrahydrofolate + H2O = (6R)-10-formyltetrahydrofolate + H(+). It functions in the pathway one-carbon metabolism; tetrahydrofolate interconversion. In terms of biological role, catalyzes the oxidation of 5,10-methylenetetrahydrofolate to 5,10-methenyltetrahydrofolate and then the hydrolysis of 5,10-methenyltetrahydrofolate to 10-formyltetrahydrofolate. This chain is Bifunctional protein FolD, found in Protochlamydia amoebophila (strain UWE25).